The sequence spans 225 residues: MISWINGDLVDLWQTNQKFFVLINCQGLGYEIQILESFFLKLRKNQISTKNITLWVKHIKKEDSDLLFGFTSNEQKNFFIEILSIRGVGSQIGIGILNKFSISEVINAIKTQDKKLICSVPGIGQKMSERLILELKSKFKSEILSEEEKSKGELEIKDPEINKMIEDLQLTLQSLSYKNKEINNILPIIIKEIDLLGKKENNLSFEKLLKLAMRYLDEDSSNIAR.

The segment at 1-71 (MISWINGDLV…EDSDLLFGFT (71 aa)) is domain I. The domain II stretch occupies residues 72–150 (SNEQKNFFIE…SEILSEEEKS (79 aa)). The segment at 151–161 (KGELEIKDPEI) is flexible linker. The tract at residues 161–225 (INKMIEDLQL…LDEDSSNIAR (65 aa)) is domain III.

Belongs to the RuvA family. As to quaternary structure, homotetramer. Forms an RuvA(8)-RuvB(12)-Holliday junction (HJ) complex. HJ DNA is sandwiched between 2 RuvA tetramers; dsDNA enters through RuvA and exits via RuvB. An RuvB hexamer assembles on each DNA strand where it exits the tetramer. Each RuvB hexamer is contacted by two RuvA subunits (via domain III) on 2 adjacent RuvB subunits; this complex drives branch migration. In the full resolvosome a probable DNA-RuvA(4)-RuvB(12)-RuvC(2) complex forms which resolves the HJ.

The protein localises to the cytoplasm. Functionally, the RuvA-RuvB-RuvC complex processes Holliday junction (HJ) DNA during genetic recombination and DNA repair, while the RuvA-RuvB complex plays an important role in the rescue of blocked DNA replication forks via replication fork reversal (RFR). RuvA specifically binds to HJ cruciform DNA, conferring on it an open structure. The RuvB hexamer acts as an ATP-dependent pump, pulling dsDNA into and through the RuvAB complex. HJ branch migration allows RuvC to scan DNA until it finds its consensus sequence, where it cleaves and resolves the cruciform DNA. In Prochlorococcus marinus (strain MIT 9301), this protein is Holliday junction branch migration complex subunit RuvA.